The following is a 992-amino-acid chain: Presequence protease, mitochondrial (992 aa).

A mitochondrion-targeting transit peptide spans 1–30; that stretch reads MNYAKLSIAFSKKTIKTHNCRLFQRWLHVG. Residue His-91 participates in Zn(2+) binding. The active-site Proton acceptor is Glu-94. Residue His-95 participates in Zn(2+) binding. The active site involves Glu-167. Glu-192 provides a ligand contact to Zn(2+).

It belongs to the peptidase M16 family. PreP subfamily. Monomer and homodimer; homodimerization is induced by binding of the substrate. Zn(2+) is required as a cofactor.

It is found in the mitochondrion intermembrane space. Its subcellular location is the mitochondrion matrix. Its function is as follows. Degrades mitochondrial transit peptides after their cleavage in the intermembrane space or in the matrix, and presequence peptides; clearance of these peptides is required to keep the presequence processing machinery running. Preferentially cleaves the N-terminal side of paired basic amino acid residues. Also degrades other unstructured peptides. May function as an ATP-dependent peptidase as opposed to a metalloendopeptidase. The polypeptide is Presequence protease, mitochondrial (cym1) (Schizosaccharomyces pombe (strain 972 / ATCC 24843) (Fission yeast)).